We begin with the raw amino-acid sequence, 64 residues long: Putative antitoxin VapB1 (64 aa).

Possibly the antitoxin component of a type II toxin-antitoxin (TA) system. Its cognate toxin is VapC1 (Potential). The chain is Putative antitoxin VapB1 (vapB1) from Methanocaldococcus jannaschii (strain ATCC 43067 / DSM 2661 / JAL-1 / JCM 10045 / NBRC 100440) (Methanococcus jannaschii).